Here is a 1061-residue protein sequence, read N- to C-terminus: MLRTAGRDGLCRLSTYLEELEAVELKKFKLYLGTATELGEGKIPWGSMEKAGPLEMAQLLITHFGPEEAWRLALSTFERINRKDLWERGQREDLVRDTPPGGPSSLGNQSTCLLEVSLVTPRKDPQETYRDYVRRKFRLMEDRNARLGECVNLSHRYTRLLLVKEHSNPMQVQQQLLDTGRGHARTVGHQASPIKIETLFEPDEERPEPPRTVVMQGAAGIGKSMLAHKVMLDWADGKLFQGRFDYLFYINCREMNQSATECSMQDLIFSCWPEPSAPLQELIRVPERLLFIIDGFDELKPSFHDPQGPWCLCWEEKRPTELLLNSLIRKKLLPELSLLITTRPTALEKLHRLLEHPRHVEILGFSEAERKEYFYKYFHNAEQAGQVFNYVRDNEPLFTMCFVPLVCWVVCTCLQQQLEGGGLLRQTSRTTTAVYMLYLLSLMQPKPGAPRLQPPPNQRGLCSLAADGLWNQKILFEEQDLRKHGLDGEDVSAFLNMNIFQKDINCERYYSFIHLSFQEFFAAMYYILDEGEGGAGPDQDVTRLLTEYAFSERSFLALTSRFLFGLLNEETRSHLEKSLCWKVSPHIKMDLLQWIQSKAQSDGSTLQQGSLEFFSCLYEIQEEEFIQQALSHFQVIVVSNIASKMEHMVSSFCLKRCRSAQVLHLYGATYSADGEDRARCSAGAHTLLVQLPERTVLLDAYSEHLAAALCTNPNLIELSLYRNALGSRGVKLLCQGLRHPNCKLQNLRLKRCRISSSACEDLSAALIANKNLTRMDLSGNGVGFPGMMLLCEGLRHPQCRLQMIQLRKCQLESGACQEMASVLGTNPHLVELDLTGNALEDLGLRLLCQGLRHPVCRLRTLWLKICRLTAAACDELASTLSVNQSLRELDLSLNELGDLGVLLLCEGLRHPTCKLQTLRLGICRLGSAACEGLSVVLQANHNLRELDLSFNDLGDWGLWLLAEGLQHPACRLQKLWLDSCGLTAKACENLYFTLGINQTLTDLYLTNNALGDTGVRLLCKRLSHPGCKLRVLWLFGMDLNKMTHSRLAALRVTKPYLDIGC.

Residues 1 to 95 (MLRTAGRDGL…WERGQREDLV (95 aa)) form the Pyrin domain. In terms of domain architecture, FISNA spans 129–201 (YRDYVRRKFR…SPIKIETLFE (73 aa)). The 318-residue stretch at 211 to 528 (RTVVMQGAAG…EFFAAMYYIL (318 aa)) folds into the NACHT domain. Residue 217-224 (GAAGIGKS) coordinates ATP. LRR repeat units lie at residues 828-848 (HLVE…RLLC), 857-878 (RLRT…ELAS), 885-906 (SLRE…LLCE), 914-935 (KLQT…GLSV), 942-962 (NLRE…WLLA), 971-992 (RLQK…NLYF), 999-1020 (TLTD…LLCK), and 1028-1049 (KLRV…RLAA).

This sequence belongs to the NLRP family. Interacts (via pyrin domain) with ASC. Interacts (via pyrin domain) with FAF1 (via UBA domain). Interacts with MAP3K14; this interaction promotes proteasomal degradation of MAP3K14. Interacts with NOD2; this interaction promotes degradation of NOD2 through the ubiquitin-proteasome pathway. Interacts with HSPA1A and HSPA8. Interacts with HSP90AA1. Interacts with TRIM25; this interaction inhibits RIGI-mediated signaling pathway. As to expression, detected only in peripheral blood leukocytes, predominantly in eosinophils and granulocytes, and at lower levels in monocytes.

It is found in the cytoplasm. In terms of biological role, plays an essential role as an potent mitigator of inflammation. Primarily expressed in dendritic cells and macrophages, inhibits both canonical and non-canonical NF-kappa-B and ERK activation pathways. Functions as a negative regulator of NOD2 by targeting it to degradation via the proteasome pathway. In turn, promotes bacterial tolerance. Also inhibits the RIGI-mediated immune signaling against RNA viruses by reducing the E3 ubiquitin ligase TRIM25-mediated 'Lys-63'-linked RIGI activation but enhancing the E3 ubiquitin ligase RNF125-mediated 'Lys-48'-linked RIGI degradation. Also acts as a negative regulator of inflammatory response to mitigate obesity and obesity-associated diseases in adipose tissue. This is NACHT, LRR and PYD domains-containing protein 12 (NLRP12) from Homo sapiens (Human).